Consider the following 124-residue polypeptide: Ribosome-binding factor A (124 aa).

Belongs to the RbfA family. In terms of assembly, monomer. Binds 30S ribosomal subunits, but not 50S ribosomal subunits or 70S ribosomes.

It is found in the cytoplasm. In terms of biological role, one of several proteins that assist in the late maturation steps of the functional core of the 30S ribosomal subunit. Associates with free 30S ribosomal subunits (but not with 30S subunits that are part of 70S ribosomes or polysomes). Required for efficient processing of 16S rRNA. May interact with the 5'-terminal helix region of 16S rRNA. In Buchnera aphidicola subsp. Schizaphis graminum (strain Sg), this protein is Ribosome-binding factor A.